We begin with the raw amino-acid sequence, 125 residues long: Small ribosomal subunit protein uS13 (125 aa).

It belongs to the universal ribosomal protein uS13 family. Part of the 30S ribosomal subunit. Forms a loose heterodimer with protein S19. Forms two bridges to the 50S subunit in the 70S ribosome.

Functionally, located at the top of the head of the 30S subunit, it contacts several helices of the 16S rRNA. In the 70S ribosome it contacts the 23S rRNA (bridge B1a) and protein L5 of the 50S subunit (bridge B1b), connecting the 2 subunits; these bridges are implicated in subunit movement. Contacts the tRNAs in the A and P-sites. This is Small ribosomal subunit protein uS13 from Rickettsia akari (strain Hartford).